The sequence spans 249 residues: dTDP-4-amino-2,3,4,6-tetradeoxy-D-glucose N,N-dimethyltransferase (249 aa).

Residue Arg30 participates in substrate binding. S-adenosyl-L-methionine-binding positions include Ala59, Glu80, and 102–103 (DI). Substrate is bound by residues Thr165, 178-182 (RLSHS), and Arg241.

This sequence belongs to the methyltransferase TylM1/DesVI family. As to quaternary structure, homodimer. Requires Mg(2+) as cofactor.

The catalysed reaction is dTDP-4-amino-2,3,4,6-tetradeoxy-alpha-D-erythro-hexopyranose + 2 S-adenosyl-L-methionine = dTDP-alpha-D-forosamine + 2 S-adenosyl-L-homocysteine + 2 H(+). In terms of biological role, involved in the biosynthesis of forosamine ((4-dimethylamino)-2,3,4,6-tetradeoxy-alpha-D-threo-hexopyranose), a highly deoxygenated sugar component of several bioactive natural products such as the insecticidal spinosyns A and D. Catalyzes the dimethylation of the C-4 amino group from dTDP-4-amino-2,3,4,6-tetradeoxy-alpha-D-glucose to yield dTDP-D-forosamine. The chain is dTDP-4-amino-2,3,4,6-tetradeoxy-D-glucose N,N-dimethyltransferase from Saccharopolyspora spinosa.